The following is a 448-amino-acid chain: Methionine aminopeptidase 2 (448 aa).

The disordered stretch occupies residues 1 to 94; it reads MAAQVTDALK…PRVLLSNLFP (94 aa). The segment covering 37-50 has biased composition (acidic residues); that stretch reads AEAEDSDDDDEEPV. Residues 61–74 are compositionally biased toward basic residues; sequence KKKRKRKKKPKKKA. Histidine 201 lines the substrate pocket. Residues aspartate 221, aspartate 232, and histidine 301 each coordinate a divalent metal cation. Residue histidine 309 participates in substrate binding. The a divalent metal cation site is built by glutamate 334 and glutamate 429.

This sequence belongs to the peptidase M24A family. Methionine aminopeptidase eukaryotic type 2 subfamily. The cofactor is Co(2+). Zn(2+) is required as a cofactor. Mn(2+) serves as cofactor. It depends on Fe(2+) as a cofactor.

The protein localises to the cytoplasm. The enzyme catalyses Release of N-terminal amino acids, preferentially methionine, from peptides and arylamides.. Cotranslationally removes the N-terminal methionine from nascent proteins. The N-terminal methionine is often cleaved when the second residue in the primary sequence is small and uncharged (Met-Ala-, Cys, Gly, Pro, Ser, Thr, or Val). This chain is Methionine aminopeptidase 2, found in Botryotinia fuckeliana (strain B05.10) (Noble rot fungus).